Reading from the N-terminus, the 479-residue chain is Probable acyl-CoA desaturase (479 aa).

Positions 1–18 (MTAPSATAFSSATTQPTT) are enriched in low complexity. Residues 1 to 28 (MTAPSATAFSSATTQPTTEGNASMRKRT) form a disordered region. The Cytoplasmic segment spans residues 1–61 (MTAPSATAFS…PWTMQNWWRH (61 aa)). Residues 62 to 82 (LNWLHCMLIFGLPMIAIYGVF) traverse the membrane as a helical segment. Residues 83-89 (TTPLQTK) lie on the Lumenal side of the membrane. The helical transmembrane segment at 90 to 110 (TLIFAIIYYAYSGLGITAGYH) threads the bilayer. H110, H115, H147, H150, and H151 together coordinate Fe cation. The Histidine box-1 motif lies at 110 to 115 (HRLWSH). The Cytoplasmic segment spans residues 111-204 (RLWSHRAYKA…DPFVMFNHRH (94 aa)). Positions 147–151 (HRAHH) match the Histidine box-2 motif. The chain crosses the membrane as a helical span at residues 205 to 225 (FLPIASFMAFIFPSLFCGLLW). The Lumenal portion of the chain corresponds to 226-229 (GDYR). The helical transmembrane segment at 230–250 (GGYFYAGVCRLVFVHHATFCV) threads the bilayer. At 251–479 (NSLAHLIGSQ…QPPIEAAAAN (229 aa)) the chain is on the cytoplasmic side. Residues H255, H284, H287, and H288 each contribute to the Fe cation site. Positions 284–288 (HNYHH) match the Histidine box-3 motif. The Cytochrome b5 heme-binding domain occupies 357–433 (QLPVMEFEDF…LSTYRVAVVR (77 aa)). Heme-binding residues include H390 and H416.

This sequence belongs to the fatty acid desaturase type 1 family. Fe(2+) is required as a cofactor.

The protein localises to the membrane. It catalyses the reaction octadecanoyl-CoA + 2 Fe(II)-[cytochrome b5] + O2 + 2 H(+) = (9Z)-octadecenoyl-CoA + 2 Fe(III)-[cytochrome b5] + 2 H2O. Stearoyl-CoA desaturase that utilizes O(2) and electrons from reduced cytochrome b5 to introduce the first double bond into saturated fatty acyl-CoA substrates. Catalyzes the insertion of a cis double bond at the delta-9 position into fatty acyl-CoA substrates including palmitoyl-CoA and stearoyl-CoA. Contributes to the biosynthesis of membrane phospholipids, cholesterol esters and triglycerides. This Schizosaccharomyces pombe (strain 972 / ATCC 24843) (Fission yeast) protein is Probable acyl-CoA desaturase.